The sequence spans 445 residues: Alkylglycerol monooxygenase (445 aa).

Helical transmembrane passes span 43–63 (ATPFFISLMLLELVVSWILKG) and 111–131 (WDSPWTWYSAFLGVDFGYYWF). The Fatty acid hydroxylase domain maps to 120–249 (AFLGVDFGYY…LIIWDKIFGT (130 aa)). Positions 132-136 (HRMAH) match the Histidine box-1 motif. The short motif at 145 to 149 (HQTHH) is the Histidine box-2 element. The Histidine box-3 motif lies at 221–225 (HRVHH). A run of 3 helical transmembrane segments spans residues 334–354 (LLKIYTVVQFALMLAFYEETF), 363–383 (VTLLLRVCFIILTLTSIGFLL), and 413–433 (VPSLSSAFEIVFSICIAFWGV).

The protein belongs to the sterol desaturase family. TMEM195 subfamily. Fe cation serves as cofactor.

The protein localises to the endoplasmic reticulum membrane. It catalyses the reaction 1-O-(1,2-saturated-alkyl)-sn-glycerol + (6R)-L-erythro-5,6,7,8-tetrahydrobiopterin + O2 = a 1-(1-hydroxyalkyl)-sn-glycerol + (6R)-L-erythro-6,7-dihydrobiopterin + H2O. Glyceryl-ether monooxygenase that cleaves the O-alkyl bond of ether lipids. Ether lipids are essential components of brain membranes. The sequence is that of Alkylglycerol monooxygenase (AGMO) from Homo sapiens (Human).